We begin with the raw amino-acid sequence, 592 residues long: MFGRTYYCGEITEKAIGETVVLKGWVQKRRDLGGLIFIDLRDRTGIVQVVFNPDVSKDALETAESIRSEYVLDITGKVVAREEATVNPNLKTGRIEIQAESVDVLSAAKTPPFAISDQAAEVSEDIRLKHRYLDLRRPEMFNSLKMRHNVTKAVRRFLDDNGFLDIETPVLTKSTPEGARDYLVPSRVHEGEFYALPQSPQIFKQLLMVSGFDRYYQIARCFRDEDLRADRQPEFTQIDIEMSFMSQEDIMKLSEEMMAHVMRETHGIEISLPLPRMSYEDAMNRYGSDKPDTRFGMLLTDVSEAVKDSDFKVFASAVANGGAVKAINVKGAAANYSRKDIDALGEFAANYGAKGLAWLKTEADGLKGPIAKFFAGEKQEALVQALDAADGDLLLFVADKLEVANDALGALRLKLGKELNLIDESLFNFLWVVDWPLLEYDAEEGRYYAAHHPFTMPVREDLKLIETNPQDMKAQAYDLVLNGYELGGGSIRIFEKDVQEKMFGLLGFSEEEAKEQFGFLLEAFDYGAPPHGGIALGLDRLVMLLSGRTNLRDTIAFPKTASASCLMTEAPSEVDNAQLDELHLEIKRKIRQ.

Glu-177 is an L-aspartate binding site. Residues 201 to 204 (QIFK) are aspartate. Arg-223 contacts L-aspartate. ATP is bound by residues 223–225 (RDE) and Gln-232. An L-aspartate-binding site is contributed by His-451. Glu-485 lines the ATP pocket. Arg-492 contacts L-aspartate. 537–540 (GLDR) provides a ligand contact to ATP.

It belongs to the class-II aminoacyl-tRNA synthetase family. Type 1 subfamily. As to quaternary structure, homodimer.

Its subcellular location is the cytoplasm. The enzyme catalyses tRNA(Asp) + L-aspartate + ATP = L-aspartyl-tRNA(Asp) + AMP + diphosphate. Its function is as follows. Catalyzes the attachment of L-aspartate to tRNA(Asp) in a two-step reaction: L-aspartate is first activated by ATP to form Asp-AMP and then transferred to the acceptor end of tRNA(Asp). This Bacillus licheniformis (strain ATCC 14580 / DSM 13 / JCM 2505 / CCUG 7422 / NBRC 12200 / NCIMB 9375 / NCTC 10341 / NRRL NRS-1264 / Gibson 46) protein is Aspartate--tRNA ligase.